Reading from the N-terminus, the 188-residue chain is Elongation factor P (188 aa).

This sequence belongs to the elongation factor P family.

The protein resides in the cytoplasm. The protein operates within protein biosynthesis; polypeptide chain elongation. Involved in peptide bond synthesis. Stimulates efficient translation and peptide-bond synthesis on native or reconstituted 70S ribosomes in vitro. Probably functions indirectly by altering the affinity of the ribosome for aminoacyl-tRNA, thus increasing their reactivity as acceptors for peptidyl transferase. In Rhodopseudomonas palustris (strain TIE-1), this protein is Elongation factor P.